The primary structure comprises 602 residues: Pentatricopeptide repeat-containing protein At5g11310, mitochondrial (602 aa).

The N-terminal 35 residues, 1–35 (MNSLFTAFRRNLLLNPNPHRNFFLHRLLSSSRRSS), are a transit peptide targeting the mitochondrion. PPR repeat units lie at residues 134 to 165 (SPSL…VRSD), 172 to 202 (SADT…ARSY), 211 to 241 (ELRL…IGGT), 249 to 283 (SVRI…NVKP), 284 to 318 (TVVT…EMEI), 319 to 353 (NFMV…ESGP), 354 to 388 (TIVT…GVDP), 389 to 423 (TTTT…GHSP), 424 to 458 (DRLT…GIDP), 459 to 493 (DLLT…GIIP), and 494 to 528 (QYIT…PHSK).

Belongs to the PPR family. P subfamily.

The protein resides in the mitochondrion. The sequence is that of Pentatricopeptide repeat-containing protein At5g11310, mitochondrial from Arabidopsis thaliana (Mouse-ear cress).